The sequence spans 186 residues: MQLVVARIGRAHGIKGEVTVEVRTDEPELRLGPGAVLATDPASVGPLTIETGRVHSGRLLLRFEGVRDRNGAEALRNTLLIAEVDPDEVPEDPDEYYDHQLMDLDVVTKDGTEVGRITEISHLPSQDLFVVERSDGSEVYIPFVEEIVVEIDLEEQRAVIDPPPGLIDDRAEVDSSDTEAATEADA.

The PRC barrel domain maps to 93 to 166 (PDEYYDHQLM…RAVIDPPPGL (74 aa)). The disordered stretch occupies residues 160–186 (IDPPPGLIDDRAEVDSSDTEAATEADA). The segment covering 174-186 (DSSDTEAATEADA) has biased composition (acidic residues).

Belongs to the RimM family. Binds ribosomal protein uS19.

Its subcellular location is the cytoplasm. Its function is as follows. An accessory protein needed during the final step in the assembly of 30S ribosomal subunit, possibly for assembly of the head region. Essential for efficient processing of 16S rRNA. May be needed both before and after RbfA during the maturation of 16S rRNA. It has affinity for free ribosomal 30S subunits but not for 70S ribosomes. This Streptomyces avermitilis (strain ATCC 31267 / DSM 46492 / JCM 5070 / NBRC 14893 / NCIMB 12804 / NRRL 8165 / MA-4680) protein is Ribosome maturation factor RimM.